Here is a 321-residue protein sequence, read N- to C-terminus: MESNGVPMITLSSGIRMPALGMGTAETMVKGTEREKLAFLKAIEVGYRHFDTAAAYQSEECLGEAIAEALQLGLIKSRDELFITSKLWCADAHADLVLPALQNSLRNLKLDYLDLYLIHHPVSLKPGKFVNEIPKDHILPMDYKSVWAAMEECQTLGFTRAIGVCNFSCKKLQELMAAAKIPPVVNQVEMSPTLHQKNLREYCKANNIMITAHSVLGAICAPWGSNAVMDSKVLHQIAVARGKSVAQVSMRWVYQQGASLVVKSFNEGRMKENLKIFDWELTAENMEKISEIPQSRTSSADFLLSPTGPFKTEEEFWDEKD.

The NADPH site is built by Thr-27 and Asp-51. Active-site proton donor residues include Tyr-56 and His-119. His-119 is a binding site for substrate. Residues Gln-187, Ser-214, Leu-216, Ser-264, and Arg-269 each contribute to the NADPH site. The segment at Ala-300–Asp-321 is disordered.

The protein belongs to the aldo/keto reductase family. In terms of tissue distribution, latex secreting cells (laticifer cells). Expressed constitutively in all organs with highest levels in capsules. Restricted to the parietal region of sieve elements adjacent or proximal to laticifers in roots, stems, leaves and carpels.

It is found in the cytoplasm. The protein localises to the cytosol. It carries out the reaction codeine + NADP(+) = codeinone + NADPH + H(+). The enzyme catalyses neopine + NADP(+) = neopinone + NADPH + H(+). The catalysed reaction is morphine + NADP(+) = morphinone + NADPH + H(+). It catalyses the reaction neomorphine + NADP(+) = neomorphinone + NADPH + H(+). Its pathway is alkaloid biosynthesis; morphine biosynthesis. NADPH-dependent codeinone reductase involved in biosynthesis of morphinan-type benzylisoquinoline and opiate alkaloids natural products. Reduces codeinone to codeine in the penultimate step in morphine biosynthesis. Can use morphinone, hydrocodone and hydromorphone as substrate during reductive reaction with NADPH as cofactor, and morphine and dihydrocodeine as substrate during oxidative reaction with NADP as cofactor. Converts morphinone to morphine, and neomorphinone to neomorphine. Reduces irreversibly neopinone, a spontaneous isomer of codeinone, to neopine; in planta, neopine levels are limited to low levels. This is NADPH-dependent codeinone reductase 1-3 from Papaver somniferum (Opium poppy).